The primary structure comprises 695 residues: DNA topoisomerase 4 subunit B (695 aa).

Residues 1–53 form a disordered region; it reads MSSSDKIPSLFGDDDALAPVPAAPFKASVEPRVEPTPRPIPPPPPSKTASAPG. Positions 36-46 are enriched in pro residues; that stretch reads TPRPIPPPPPS. Residues Tyr55, Asn95, Asp122, 164–170, and Lys397 contribute to the ATP site; that span reads GLHGVGA. Positions 477–591 constitute a Toprim domain; sequence AELFIVEGDS…GGHLFLALPP (115 aa). The Mg(2+) site is built by Glu483, Asp556, and Asp558.

Belongs to the type II topoisomerase family. ParE type 1 subfamily. As to quaternary structure, heterotetramer composed of ParC and ParE. Mg(2+) is required as a cofactor. The cofactor is Mn(2+). Requires Ca(2+) as cofactor.

It catalyses the reaction ATP-dependent breakage, passage and rejoining of double-stranded DNA.. Topoisomerase IV is essential for chromosome segregation. It relaxes supercoiled DNA. Performs the decatenation events required during the replication of a circular DNA molecule. The protein is DNA topoisomerase 4 subunit B of Caulobacter vibrioides (strain ATCC 19089 / CIP 103742 / CB 15) (Caulobacter crescentus).